Consider the following 712-residue polypeptide: Frizzled-6 (712 aa).

A signal peptide spans 1 to 18; that stretch reads MEMFTFLLTCVFLPFVRG. In terms of domain architecture, FZ spans 19-132; that stretch reads HSLFTCEPIT…CDRLQYCDET (114 aa). Residues 19–201 lie on the Extracellular side of the membrane; it reads HSLFTCEPIT…SDELEFAKSF (183 aa). 5 cysteine pairs are disulfide-bonded: Cys24–Cys85, Cys32–Cys78, Cys69–Cys106, Cys95–Cys129, and Cys99–Cys123. N-linked (GlcNAc...) asparagine glycosylation is present at Asn38. Residues 202–222 form a helical membrane-spanning segment; it reads IGIVSIFCLCATLFTFLTFLI. Residues 223-233 are Cytoplasmic-facing; sequence DVKRFRYPERP. Residues 234–254 traverse the membrane as a helical segment; sequence IIYYSVCYSIVSLMYFIGFLL. Residues 255 to 284 lie on the Extracellular side of the membrane; the sequence is GDRTACNKADEKLELGDTVVLGSQNKACTV. Residues 285–305 traverse the membrane as a helical segment; that stretch reads LFMFLYFFTMAGTVWWVILTI. Over 306 to 324 the chain is Cytoplasmic; the sequence is TWFLAAGRKWSCEAIEQKA. A helical membrane pass occupies residues 325 to 345; the sequence is VWFHAVAWGIPGFLTVMLLAM. Residues 346-370 are Extracellular-facing; that stretch reads NKVEGDNISGVCFVGLYDLDASRYF. Residue Asn352 is glycosylated (N-linked (GlcNAc...) asparagine). A helical membrane pass occupies residues 371–391; the sequence is VLLPLCLCVFVGLSLLLAGII. Residues 392–416 are Cytoplasmic-facing; it reads SLNHVRQVIQHDGRNQEKLKKFMIR. The chain crosses the membrane as a helical span at residues 417–437; that stretch reads IGVFSGLYLVPLVTLLGCYVY. Residues 438–473 lie on the Extracellular side of the membrane; the sequence is EQVNRITWEITWVSDHCRQYHIPCPYQAKTETRPEL. A helical membrane pass occupies residues 474-494; that stretch reads ALFMIKYLMTLIVGISAVFWV. The Cytoplasmic portion of the chain corresponds to 495–712; it reads GSKKTCTEWA…EHGTGSHSDT (218 aa). The Lys-Thr-X-X-X-Trp motif, mediates interaction with the PDZ domain of Dvl family members signature appears at 498 to 503; the sequence is KTCTEW. Positions 588 to 712 are disordered; it reads EIQTSPETSV…EHGTGSHSDT (125 aa). 2 stretches are compositionally biased toward basic and acidic residues: residues 628–637 and 652–664; these read LCEEQADRKG and TRSE…KSDV. Positions 668-693 are enriched in polar residues; that stretch reads GPMQSSSLQVPGSSEPGSLKGSTSLL. A compositionally biased stretch (basic and acidic residues) spans 700-712; that stretch reads GRKEHGTGSHSDT.

Belongs to the G-protein coupled receptor Fz/Smo family. As to quaternary structure, interacts with LMBR1L. Post-translationally, ubiquitinated by ZNRF3, leading to its degradation by the proteasome.

The protein localises to the membrane. The protein resides in the cell membrane. It is found in the cell surface. Its subcellular location is the apical cell membrane. It localises to the cytoplasmic vesicle membrane. The protein localises to the endoplasmic reticulum membrane. Its function is as follows. Receptor for Wnt proteins. Most of frizzled receptors are coupled to the beta-catenin canonical signaling pathway, which leads to the activation of disheveled proteins, inhibition of GSK-3 kinase, nuclear accumulation of beta-catenin and activation of Wnt target genes. A second signaling pathway involving PKC and calcium fluxes has been seen for some family members, but it is not yet clear if it represents a distinct pathway or if it can be integrated in the canonical pathway, as PKC seems to be required for Wnt-mediated inactivation of GSK-3 kinase. Both pathways seem to involve interactions with G-proteins. Activation by Wnt5A stimulates PKC activity via a G-protein-dependent mechanism. Involved in transduction and intercellular transmission of polarity information during tissue morphogenesis and/or in differentiated tissues. Together with FZD3, is involved in the neural tube closure and plays a role in the regulation of the establishment of planar cell polarity (PCP), particularly in the orientation of asymmetric bundles of stereocilia on the apical faces of a subset of auditory and vestibular sensory cells located in the inner ear. In Canis lupus familiaris (Dog), this protein is Frizzled-6 (FZD6).